The sequence spans 469 residues: SWI/SNF complex subunit SWI3B (469 aa).

The disordered stretch occupies residues 1–42; sequence MAMKAPDPGGSGEILPSTPSLSETTSGGAAAASKSAQLPSSS. Low complexity predominate over residues 15-42; it reads LPSTPSLSETTSGGAAAASKSAQLPSSS. The SWIRM domain occupies 48–145; sequence IHVPSYSSWF…YNSSASAKPL (98 aa). In terms of domain architecture, SANT spans 223-274; the sequence is ESKPEWSDKEILLLLEAVMHYGDDWKKVASHVIGRTEKDCVSQFVKLPFGEQ. Composition is skewed to basic and acidic residues over residues 293-306 and 360-369; these read DSDIPESEGIDKDG and DKNASRDPNR. 2 disordered regions span residues 293–314 and 360–387; these read DSDIPESEGIDKDGSSPNKRIK and DKNASRDPNRQDANAASSGETTRNESER. Residues 370–380 are compositionally biased toward polar residues; that stretch reads QDANAASSGET. Residues 423–447 adopt a coiled-coil conformation; that stretch reads VHFEKLDLEMERSRKQLEEVRNLLF.

Homodimers and heterodimers. Interacts with SWI3A, SWI3C, SWI3D, BSH, BRM and FCA (via C-terminus), and (via N-terminus) with HAB1. Interacts with MORC6 and SUVH9. As to expression, expressed in roots, stems, leaves, flowers and siliques.

It localises to the nucleus. Its function is as follows. Component of a multiprotein complex equivalent of the SWI/SNF complex, an ATP-dependent chromatin-remodeling complex, which is required for the positive and negative regulation of gene expression of a large number of genes. It changes chromatin structure by altering DNA-histone contacts within a nucleosome, leading eventually to a change in nucleosome position, thus facilitating or repressing binding of gene-specific transcription factors. May play an essential role in the transition from the vegetative to the reproductive phase of development. May be a positive regulator of ABA signaling. The chain is SWI/SNF complex subunit SWI3B (SWI3B) from Arabidopsis thaliana (Mouse-ear cress).